The primary structure comprises 87 residues: uncharacterized protein (87 aa).

Residues 42 to 62 (LADALYSAGSAAFTIAASLVA) form a helical membrane-spanning segment.

This sequence belongs to the SPP1 holin family.

It localises to the membrane. This is an uncharacterized protein from Bacillus licheniformis.